The primary structure comprises 1217 residues: Valine--tRNA ligase (1217 aa).

The region spanning N27–V155 is the GST C-terminal domain. A 'HIGH' region motif is present at residues P293–H303. The 'KMSKS' region motif lies at K809–S813. K812 is an ATP binding site.

This sequence belongs to the class-I aminoacyl-tRNA synthetase family.

It carries out the reaction tRNA(Val) + L-valine + ATP = L-valyl-tRNA(Val) + AMP + diphosphate. The polypeptide is Valine--tRNA ligase (vars1) (Takifugu rubripes (Japanese pufferfish)).